The chain runs to 218 residues: MGQKVNPVGLRIGVIRDWESKWYAGKDYADFLHEDLKIREFINQRLSDASVSKVEIERAANRVNITIHTAKPGMVIGKGGSEVEALRKALNSLTGKRVHINILEIKRADLDAQLVADNIARQLENRISFRRAQKQQIQRTMRAGAQGIKTMVSGRLGGADIARSEYYSEGTVPLHTLRADIDYATSEADTTYGKLGVKVWIYRGEVLPTKKKTEEGGK.

The region spanning 38-106 is the KH type-2 domain; the sequence is IREFINQRLS…RVHINILEIK (69 aa).

Belongs to the universal ribosomal protein uS3 family. In terms of assembly, part of the 30S ribosomal subunit. Forms a tight complex with proteins S10 and S14.

Binds the lower part of the 30S subunit head. Binds mRNA in the 70S ribosome, positioning it for translation. The chain is Small ribosomal subunit protein uS3 from Bacillus licheniformis (strain ATCC 14580 / DSM 13 / JCM 2505 / CCUG 7422 / NBRC 12200 / NCIMB 9375 / NCTC 10341 / NRRL NRS-1264 / Gibson 46).